The sequence spans 102 residues: Matrix Gla protein (102 aa).

Ser-2, Ser-3, and Ser-5 each carry phosphoserine. Residues 18–45 (DANSFMRQPRPPNHWDSRDRFKSPRERT) are disordered. One can recognise a Gla domain in the interval 27–73 (RPPNHWDSRDRFKSPRERTREKCEEYRPCERLARQVGLKRAYGKYFG). Residues 30–45 (NHWDSRDRFKSPRERT) are compositionally biased toward basic and acidic residues. A 4-carboxyglutamate mark is found at Glu-43, Glu-47, Glu-50, and Glu-51. Residues Cys-49 and Cys-55 are joined by a disulfide bond. The segment at 72–102 (FGNRRQRPSTSGRLRPRKYRASRYRNHHYRY) is disordered. The span at 85–102 (LRPRKYRASRYRNHHYRY) shows a compositional bias: basic residues.

Belongs to the osteocalcin/matrix Gla protein family. Post-translationally, requires vitamin K-dependent gamma-carboxylation for its function. Accounts for 35-40% of the total protein in the acid demineralization extract of calcified cartilage.

It is found in the secreted. Its function is as follows. Associates with the organic matrix of calcified cartilage. The protein is Matrix Gla protein (mgp) of Galeorhinus galeus (Tope shark).